The primary structure comprises 310 residues: HPr kinase/phosphorylase (310 aa).

Catalysis depends on residues His138 and Lys159. 153 to 160 (GKSGVGKS) lines the ATP pocket. A Mg(2+)-binding site is contributed by Ser160. Residue Asp177 is the Proton acceptor; for phosphorylation activity. Proton donor; for dephosphorylation activity of the active site. The tract at residues 201–210 (LEIRGLGIIN) is important for the catalytic mechanism of both phosphorylation and dephosphorylation. A Mg(2+)-binding site is contributed by Glu202. Arg243 is a catalytic residue. The tract at residues 264-269 (PVRPGR) is important for the catalytic mechanism of dephosphorylation.

The protein belongs to the HPrK/P family. In terms of assembly, homohexamer. Mg(2+) is required as a cofactor.

It carries out the reaction [HPr protein]-L-serine + ATP = [HPr protein]-O-phospho-L-serine + ADP + H(+). The enzyme catalyses [HPr protein]-O-phospho-L-serine + phosphate + H(+) = [HPr protein]-L-serine + diphosphate. Its function is as follows. Catalyzes the ATP- as well as the pyrophosphate-dependent phosphorylation of a specific serine residue in HPr, a phosphocarrier protein of the phosphoenolpyruvate-dependent sugar phosphotransferase system (PTS). HprK/P also catalyzes the pyrophosphate-producing, inorganic phosphate-dependent dephosphorylation (phosphorolysis) of seryl-phosphorylated HPr (P-Ser-HPr). The two antagonistic activities of HprK/P are regulated by several intracellular metabolites, which change their concentration in response to the absence or presence of rapidly metabolisable carbon sources (glucose, fructose, etc.) in the growth medium. Also phosphorylates/dephosphorylates the HPr-like catabolite repression protein crh on a specific serine residue. Therefore, by controlling the phosphorylation state of HPr and crh, HPrK/P is a sensor enzyme that plays a major role in the regulation of carbon metabolism and sugar transport: it mediates carbon catabolite repression (CCR), and regulates PTS-catalyzed carbohydrate uptake and inducer exclusion. The protein is HPr kinase/phosphorylase of Bacillus velezensis (strain DSM 23117 / BGSC 10A6 / LMG 26770 / FZB42) (Bacillus amyloliquefaciens subsp. plantarum).